The following is a 179-amino-acid chain: Cytochrome c-type biogenesis protein CcmE (179 aa).

Residues 1–8 (MTPRRKSR) are Cytoplasmic-facing. Residues 9–29 (MTVILFVLLGISIASALVLYA) traverse the membrane as a helical; Signal-anchor for type II membrane protein segment. Residues 30–179 (LRQNIDLFYT…QKTSMQEGQK (150 aa)) lie on the Periplasmic side of the membrane. 2 residues coordinate heme: His131 and Tyr135. The segment at 151-179 (MGVADLKGESERDRQEKAYQKTSMQEGQK) is disordered. Positions 156-169 (LKGESERDRQEKAY) are enriched in basic and acidic residues. Over residues 170–179 (QKTSMQEGQK) the composition is skewed to polar residues.

The protein belongs to the CcmE/CycJ family.

The protein localises to the cell inner membrane. Functionally, heme chaperone required for the biogenesis of c-type cytochromes. Transiently binds heme delivered by CcmC and transfers the heme to apo-cytochromes in a process facilitated by CcmF and CcmH. The polypeptide is Cytochrome c-type biogenesis protein CcmE (Pasteurella multocida (strain Pm70)).